Here is a 346-residue protein sequence, read N- to C-terminus: Probable dual-specificity RNA methyltransferase RlmN (346 aa).

Glu-76 serves as the catalytic Proton acceptor. A Radical SAM core domain is found at 97 to 329 (SYDRATICVS…TFIRKPRGRD (233 aa)). Residues Cys-104 and Cys-334 are joined by a disulfide bond. [4Fe-4S] cluster is bound by residues Cys-111, Cys-115, and Cys-118. Residues 162-163 (GE), Ser-192, 215-217 (SLN), and Asn-291 contribute to the S-adenosyl-L-methionine site. Cys-334 acts as the S-methylcysteine intermediate in catalysis.

The protein belongs to the radical SAM superfamily. RlmN family. [4Fe-4S] cluster is required as a cofactor.

The protein resides in the cytoplasm. It carries out the reaction adenosine(2503) in 23S rRNA + 2 reduced [2Fe-2S]-[ferredoxin] + 2 S-adenosyl-L-methionine = 2-methyladenosine(2503) in 23S rRNA + 5'-deoxyadenosine + L-methionine + 2 oxidized [2Fe-2S]-[ferredoxin] + S-adenosyl-L-homocysteine. The catalysed reaction is adenosine(37) in tRNA + 2 reduced [2Fe-2S]-[ferredoxin] + 2 S-adenosyl-L-methionine = 2-methyladenosine(37) in tRNA + 5'-deoxyadenosine + L-methionine + 2 oxidized [2Fe-2S]-[ferredoxin] + S-adenosyl-L-homocysteine. Specifically methylates position 2 of adenine 2503 in 23S rRNA and position 2 of adenine 37 in tRNAs. The sequence is that of Probable dual-specificity RNA methyltransferase RlmN from Koribacter versatilis (strain Ellin345).